The sequence spans 235 residues: uncharacterized protein (235 aa).

An N-terminal signal peptide occupies residues 1-24; it reads MSDRMKLKGLLAFCLLFLSSFVLA.

This is an uncharacterized protein from Haemophilus influenzae (strain ATCC 51907 / DSM 11121 / KW20 / Rd).